The sequence spans 377 residues: UPF0754 membrane protein lwe2241 (377 aa).

The next 2 membrane-spanning stretches (helical) occupy residues 1–21 (MSVLFTILLMAVIGGFIGAMT) and 357–377 (YLGGILGGFIGVIQGILAIWI).

Belongs to the UPF0754 family.

The protein resides in the cell membrane. The sequence is that of UPF0754 membrane protein lwe2241 from Listeria welshimeri serovar 6b (strain ATCC 35897 / DSM 20650 / CCUG 15529 / CIP 8149 / NCTC 11857 / SLCC 5334 / V8).